A 327-amino-acid chain; its full sequence is 4-hydroxythreonine-4-phosphate dehydrogenase (327 aa).

Residues His134 and Thr135 each coordinate substrate. His164, His209, and His264 together coordinate a divalent metal cation. The substrate site is built by Lys272, Asn281, and Arg290.

Belongs to the PdxA family. As to quaternary structure, homodimer. Zn(2+) serves as cofactor. Requires Mg(2+) as cofactor. Co(2+) is required as a cofactor.

Its subcellular location is the cytoplasm. It catalyses the reaction 4-(phosphooxy)-L-threonine + NAD(+) = 3-amino-2-oxopropyl phosphate + CO2 + NADH. Its pathway is cofactor biosynthesis; pyridoxine 5'-phosphate biosynthesis; pyridoxine 5'-phosphate from D-erythrose 4-phosphate: step 4/5. Its function is as follows. Catalyzes the NAD(P)-dependent oxidation of 4-(phosphooxy)-L-threonine (HTP) into 2-amino-3-oxo-4-(phosphooxy)butyric acid which spontaneously decarboxylates to form 3-amino-2-oxopropyl phosphate (AHAP). In Shewanella frigidimarina (strain NCIMB 400), this protein is 4-hydroxythreonine-4-phosphate dehydrogenase.